A 427-amino-acid chain; its full sequence is Glutamate-1-semialdehyde 2,1-aminomutase (427 aa).

At Lys265 the chain carries N6-(pyridoxal phosphate)lysine.

The protein belongs to the class-III pyridoxal-phosphate-dependent aminotransferase family. HemL subfamily. Homodimer. Pyridoxal 5'-phosphate serves as cofactor.

The protein resides in the cytoplasm. The enzyme catalyses (S)-4-amino-5-oxopentanoate = 5-aminolevulinate. It functions in the pathway porphyrin-containing compound metabolism; protoporphyrin-IX biosynthesis; 5-aminolevulinate from L-glutamyl-tRNA(Glu): step 2/2. This Idiomarina loihiensis (strain ATCC BAA-735 / DSM 15497 / L2-TR) protein is Glutamate-1-semialdehyde 2,1-aminomutase.